The chain runs to 327 residues: Malate dehydrogenase (327 aa).

11–17 (GAAGQIA) contributes to the NAD(+) binding site. Arg-92 and Arg-98 together coordinate substrate. NAD(+) contacts are provided by residues Asn-105, Gln-112, and 129 to 131 (VGN). Positions 131 and 162 each coordinate substrate. The active-site Proton acceptor is His-187.

This sequence belongs to the LDH/MDH superfamily. MDH type 2 family.

The enzyme catalyses (S)-malate + NAD(+) = oxaloacetate + NADH + H(+). Functionally, catalyzes the reversible oxidation of malate to oxaloacetate. This chain is Malate dehydrogenase, found in Nitrosospira multiformis (strain ATCC 25196 / NCIMB 11849 / C 71).